We begin with the raw amino-acid sequence, 434 residues long: Septin-7 (434 aa).

Phosphotyrosine is present on Y27. Residues 44 to 313 enclose the Septin-type G domain; sequence RGFEFTLMVV…ENYRSRKLAA (270 aa). The segment at 44–314 is interaction with SEPTIN12; the sequence is RGFEFTLMVV…NYRSRKLAAV (271 aa). Positions 54–61 are G1 motif; sequence GESGLGKS. 54–61 lines the GTP pocket; the sequence is GESGLGKS. Phosphoserine is present on S74. GTP contacts are provided by residues T87, G113, and 192–200; that span reads KADTLTPEE. The interval 110-113 is G3 motif; the sequence is DTPG. A G4 motif region spans residues 191–194; sequence AKAD. Residue T225 is modified to Phosphothreonine. GTP is bound by residues G247 and R262. Residues 329–434 adopt a coiled-coil conformation; the sequence is TKSPLAQMEE…EKNKKKGKIF (106 aa). S331 carries the post-translational modification Phosphoserine. K370 carries the post-translational modification N6-acetyllysine. Basic and acidic residues predominate over residues 377–407; that stretch reads QRRHEQMKKNLEAQHKGLEEKRRQFEDEKAN. Positions 377-434 are disordered; that stretch reads QRRHEQMKKNLEAQHKGLEEKRRQFEDEKANWEAQQRILEQQNSSRTLEKNKKKGKIF. Phosphoserine is present on S421. Position 423 is a phosphothreonine (T423).

Belongs to the TRAFAC class TrmE-Era-EngA-EngB-Septin-like GTPase superfamily. Septin GTPase family. As to quaternary structure, septins polymerize into heterooligomeric protein complexes that form filaments, and associate with cellular membranes, actin filaments and microtubules. GTPase activity is required for filament formation. Filaments are assembled from asymmetrical heterotrimers, composed of SEPTIN2, SEPTIN6 and SEPTIN7 that associate head-to-head to form a hexameric unit. Within the trimer, directly interacts with SEPTIN6, while interaction with SEPTIN2 seems indirect. In the absence of SEPTIN6, forms homodimers. Interacts directly with CENPE and links CENPE to septin filaments composed of SEPTIN2, SEPTIN6 and SEPTIN7. Interacts with SEPTIN5, SEPTIN8, SEPTIN9 and SEPTIN11. Component of a septin core octameric complex consisting of SEPTIN12, SEPTIN7, SEPTIN6 and SEPTIN2 or SEPTIN4 in the order 12-7-6-2-2-6-7-12 or 12-7-6-4-4-6-7-12 and located in the sperm annulus; the SEPTIN12:SEPTIN7 association is mediated by the respective GTP-binding domains.

The protein resides in the cytoplasm. It localises to the chromosome. Its subcellular location is the centromere. It is found in the kinetochore. The protein localises to the cytoskeleton. The protein resides in the spindle. It localises to the cleavage furrow. Its subcellular location is the midbody. It is found in the cilium axoneme. The protein localises to the cell projection. The protein resides in the cilium. It localises to the flagellum. Filament-forming cytoskeletal GTPase. Required for normal organization of the actin cytoskeleton. Required for normal progress through mitosis. Involved in cytokinesis. Required for normal association of CENPE with the kinetochore. Plays a role in ciliogenesis and collective cell movements. Forms a filamentous structure with SEPTIN12, SEPTIN6, SEPTIN2 and probably SEPTIN4 at the sperm annulus which is required for the structural integrity and motility of the sperm tail during postmeiotic differentiation. This Pan troglodytes (Chimpanzee) protein is Septin-7.